A 254-amino-acid chain; its full sequence is Triosephosphate isomerase (254 aa).

12-14 (NWK) contacts substrate. His-99 acts as the Electrophile in catalysis. Glu-169 acts as the Proton acceptor in catalysis. Substrate contacts are provided by residues Gly-175, Ser-214, and 235–236 (GG).

Belongs to the triosephosphate isomerase family. Homodimer.

It is found in the cytoplasm. The catalysed reaction is D-glyceraldehyde 3-phosphate = dihydroxyacetone phosphate. Its pathway is carbohydrate biosynthesis; gluconeogenesis. The protein operates within carbohydrate degradation; glycolysis; D-glyceraldehyde 3-phosphate from glycerone phosphate: step 1/1. Its function is as follows. Involved in the gluconeogenesis. Catalyzes stereospecifically the conversion of dihydroxyacetone phosphate (DHAP) to D-glyceraldehyde-3-phosphate (G3P). The chain is Triosephosphate isomerase from Chelativorans sp. (strain BNC1).